The sequence spans 453 residues: Bifunctional protein GlmU (453 aa).

A pyrophosphorylase region spans residues methionine 1–arginine 227. Residues leucine 9–glycine 12, lysine 23, glutamine 74, glycine 79–threonine 80, tyrosine 101–aspartate 103, glycine 138, glutamate 152, asparagine 167, and asparagine 225 each bind UDP-N-acetyl-alpha-D-glucosamine. Position 103 (aspartate 103) interacts with Mg(2+). Position 225 (asparagine 225) interacts with Mg(2+). Positions leucine 228–alanine 248 are linker. Residues glycine 249 to lysine 453 form an N-acetyltransferase region. Residues arginine 331 and lysine 349 each contribute to the UDP-N-acetyl-alpha-D-glucosamine site. Residue histidine 361 is the Proton acceptor of the active site. Tyrosine 364 and asparagine 375 together coordinate UDP-N-acetyl-alpha-D-glucosamine. Acetyl-CoA-binding positions include alanine 378, asparagine 384 to tyrosine 385, serine 403, alanine 421, and arginine 438.

In the N-terminal section; belongs to the N-acetylglucosamine-1-phosphate uridyltransferase family. The protein in the C-terminal section; belongs to the transferase hexapeptide repeat family. Homotrimer. It depends on Mg(2+) as a cofactor.

The protein localises to the cytoplasm. The enzyme catalyses alpha-D-glucosamine 1-phosphate + acetyl-CoA = N-acetyl-alpha-D-glucosamine 1-phosphate + CoA + H(+). It catalyses the reaction N-acetyl-alpha-D-glucosamine 1-phosphate + UTP + H(+) = UDP-N-acetyl-alpha-D-glucosamine + diphosphate. Its pathway is nucleotide-sugar biosynthesis; UDP-N-acetyl-alpha-D-glucosamine biosynthesis; N-acetyl-alpha-D-glucosamine 1-phosphate from alpha-D-glucosamine 6-phosphate (route II): step 2/2. It functions in the pathway nucleotide-sugar biosynthesis; UDP-N-acetyl-alpha-D-glucosamine biosynthesis; UDP-N-acetyl-alpha-D-glucosamine from N-acetyl-alpha-D-glucosamine 1-phosphate: step 1/1. The protein operates within bacterial outer membrane biogenesis; LPS lipid A biosynthesis. Functionally, catalyzes the last two sequential reactions in the de novo biosynthetic pathway for UDP-N-acetylglucosamine (UDP-GlcNAc). The C-terminal domain catalyzes the transfer of acetyl group from acetyl coenzyme A to glucosamine-1-phosphate (GlcN-1-P) to produce N-acetylglucosamine-1-phosphate (GlcNAc-1-P), which is converted into UDP-GlcNAc by the transfer of uridine 5-monophosphate (from uridine 5-triphosphate), a reaction catalyzed by the N-terminal domain. This chain is Bifunctional protein GlmU, found in Histophilus somni (strain 129Pt) (Haemophilus somnus).